The chain runs to 243 residues: ATP-dependent dethiobiotin synthetase BioD (243 aa).

12-17 (DVGKTL) is an ATP binding site. Residue Thr-16 participates in Mg(2+) binding. Lys-37 is an active-site residue. Residue Ser-41 coordinates substrate. Residues Asp-54, 115-118 (EGCG), and 179-180 (NM) each bind ATP. 2 residues coordinate Mg(2+): Asp-54 and Glu-115.

This sequence belongs to the dethiobiotin synthetase family. Homodimer. Mg(2+) serves as cofactor.

The protein localises to the cytoplasm. It catalyses the reaction (7R,8S)-7,8-diammoniononanoate + CO2 + ATP = (4R,5S)-dethiobiotin + ADP + phosphate + 3 H(+). It participates in cofactor biosynthesis; biotin biosynthesis; biotin from 7,8-diaminononanoate: step 1/2. Functionally, catalyzes a mechanistically unusual reaction, the ATP-dependent insertion of CO2 between the N7 and N8 nitrogen atoms of 7,8-diaminopelargonic acid (DAPA, also called 7,8-diammoniononanoate) to form a ureido ring. The protein is ATP-dependent dethiobiotin synthetase BioD of Caldicellulosiruptor saccharolyticus (strain ATCC 43494 / DSM 8903 / Tp8T 6331).